Consider the following 376-residue polypeptide: Anhydro-N-acetylmuramic acid kinase (376 aa).

22–29 contributes to the ATP binding site; it reads GTSMDGAD.

The protein belongs to the anhydro-N-acetylmuramic acid kinase family.

The catalysed reaction is 1,6-anhydro-N-acetyl-beta-muramate + ATP + H2O = N-acetyl-D-muramate 6-phosphate + ADP + H(+). It participates in amino-sugar metabolism; 1,6-anhydro-N-acetylmuramate degradation. It functions in the pathway cell wall biogenesis; peptidoglycan recycling. Functionally, catalyzes the specific phosphorylation of 1,6-anhydro-N-acetylmuramic acid (anhMurNAc) with the simultaneous cleavage of the 1,6-anhydro ring, generating MurNAc-6-P. Is required for the utilization of anhMurNAc either imported from the medium or derived from its own cell wall murein, and thus plays a role in cell wall recycling. This Neisseria gonorrhoeae (strain NCCP11945) protein is Anhydro-N-acetylmuramic acid kinase.